Consider the following 147-residue polypeptide: Large ribosomal subunit protein bL9 (147 aa).

It belongs to the bacterial ribosomal protein bL9 family.

Functionally, binds to the 23S rRNA. In Clostridium botulinum (strain 657 / Type Ba4), this protein is Large ribosomal subunit protein bL9.